The following is a 472-amino-acid chain: Ribosomal protein uS12 methylthiotransferase RimO (472 aa).

Positions 33 to 143 constitute an MTTase N-terminal domain; that stretch reads NRIGFVSLGC…VLKHVHKYVP (111 aa). 6 residues coordinate [4Fe-4S] cluster: Cys-42, Cys-78, Cys-107, Cys-175, Cys-179, and Cys-182. The region spanning 161–398 is the Radical SAM core domain; it reads LTPKHYAYLK…MEVQAEISAE (238 aa). The TRAM domain occupies 401-467; it reads ARFVGRTLDI…EHDLWAEVVD (67 aa).

The protein belongs to the methylthiotransferase family. RimO subfamily. Requires [4Fe-4S] cluster as cofactor.

The protein localises to the cytoplasm. It catalyses the reaction L-aspartate(89)-[ribosomal protein uS12]-hydrogen + (sulfur carrier)-SH + AH2 + 2 S-adenosyl-L-methionine = 3-methylsulfanyl-L-aspartate(89)-[ribosomal protein uS12]-hydrogen + (sulfur carrier)-H + 5'-deoxyadenosine + L-methionine + A + S-adenosyl-L-homocysteine + 2 H(+). Functionally, catalyzes the methylthiolation of an aspartic acid residue of ribosomal protein uS12. This chain is Ribosomal protein uS12 methylthiotransferase RimO, found in Shewanella baltica (strain OS195).